The sequence spans 55 residues: Large ribosomal subunit protein bL33C (55 aa).

It belongs to the bacterial ribosomal protein bL33 family.

The polypeptide is Large ribosomal subunit protein bL33C (Kineococcus radiotolerans (strain ATCC BAA-149 / DSM 14245 / SRS30216)).